A 261-amino-acid polypeptide reads, in one-letter code: Lysoplasmalogenase (261 aa).

Transmembrane regions (helical) follow at residues 29–49 (GWVV…VIAL), 65–85 (PAFK…HPIG), 90–107 (WLVP…LLAI), 111–133 (TWAF…GALL), 146–166 (VAAV…FWPH), 172–192 (LTIP…TALL), 197–217 (TIWT…IGIG), and 227–247 (AVPI…GFFF).

This sequence belongs to the TMEM86 family.

The protein resides in the cell membrane. The enzyme catalyses a 1-O-(1Z-alkenyl)-sn-glycero-3-phosphocholine + H2O = a 2,3-saturated aldehyde + sn-glycerol 3-phosphocholine. The catalysed reaction is a 1-O-(1Z-alkenyl)-sn-glycero-3-phosphoethanolamine + H2O = a 2,3-saturated aldehyde + sn-glycero-3-phosphoethanolamine. In terms of biological role, specifically hydrolyzes the vinyl ether bond of lysoplasmenylcholine (pLPC) and lysoplasmenylethanolamine (pLPE) to release a fatty aldehyde and glycerophospho-choline or glycerophospho-ethanolamine. The chain is Lysoplasmalogenase from Mycobacterium bovis (strain ATCC BAA-935 / AF2122/97).